A 404-amino-acid chain; its full sequence is Cysteine desulfurase IscS (404 aa).

Pyridoxal 5'-phosphate-binding positions include 85-86, Asn165, Gln193, 213-215, and Thr251; these read GT and SGH. The active-site Cysteine persulfide intermediate is Cys338. Cys338 contributes to the [2Fe-2S] cluster binding site.

Belongs to the class-V pyridoxal-phosphate-dependent aminotransferase family. NifS/IscS subfamily. Homodimer. Forms a heterotetramer with IscU, interacts with other sulfur acceptors. Pyridoxal 5'-phosphate is required as a cofactor.

It is found in the cytoplasm. It catalyses the reaction (sulfur carrier)-H + L-cysteine = (sulfur carrier)-SH + L-alanine. Its pathway is cofactor biosynthesis; iron-sulfur cluster biosynthesis. Master enzyme that delivers sulfur to a number of partners involved in Fe-S cluster assembly, tRNA modification or cofactor biosynthesis. Catalyzes the removal of elemental sulfur atoms from cysteine to produce alanine. Functions as a sulfur delivery protein for Fe-S cluster synthesis onto IscU, an Fe-S scaffold assembly protein, as well as other S acceptor proteins. The polypeptide is Cysteine desulfurase IscS (Methanosarcina thermophila).